The following is a 438-amino-acid chain: Xaa-Pro dipeptidase 2 (438 aa).

Positions 242, 253, 333, 378, and 414 each coordinate Mn(2+).

Belongs to the peptidase M24B family. Bacterial-type prolidase subfamily. Mn(2+) serves as cofactor.

The catalysed reaction is Xaa-L-Pro dipeptide + H2O = an L-alpha-amino acid + L-proline. Its function is as follows. Splits dipeptides with a prolyl residue in the C-terminal position. This chain is Xaa-Pro dipeptidase 2, found in Idiomarina loihiensis (strain ATCC BAA-735 / DSM 15497 / L2-TR).